The chain runs to 599 residues: Elongation factor 4 (599 aa).

In terms of domain architecture, tr-type G spans 4 to 186 (KFIRNFSIIA…AIIKHVPPPL (183 aa)). GTP-binding positions include 16-21 (DHGKST) and 133-136 (NKID).

The protein belongs to the TRAFAC class translation factor GTPase superfamily. Classic translation factor GTPase family. LepA subfamily.

It localises to the cell membrane. The catalysed reaction is GTP + H2O = GDP + phosphate + H(+). Required for accurate and efficient protein synthesis under certain stress conditions. May act as a fidelity factor of the translation reaction, by catalyzing a one-codon backward translocation of tRNAs on improperly translocated ribosomes. Back-translocation proceeds from a post-translocation (POST) complex to a pre-translocation (PRE) complex, thus giving elongation factor G a second chance to translocate the tRNAs correctly. Binds to ribosomes in a GTP-dependent manner. This Ureaplasma urealyticum serovar 10 (strain ATCC 33699 / Western) protein is Elongation factor 4.